A 410-amino-acid polypeptide reads, in one-letter code: F-box protein At5g36730 (410 aa).

Residues Met-1–Leu-46 enclose the F-box domain.

The sequence is that of F-box protein At5g36730 from Arabidopsis thaliana (Mouse-ear cress).